We begin with the raw amino-acid sequence, 508 residues long: MILVLDFGSQYTQLIARRLRESGIYTEIVPFFESIENIQKKAPKGLILSGGPASVYAKDAYKPSGKIFDLNVPILGICYGMQYLVDFFGGVVVGANEQEFGKAVLEIAQNSVIFEGVKIKSLVWMSHMDKVIELPKGFTTLAKSPNSPHCAIENGKIFGLQFHPEVVQSEEGGKILENFALLVCGCEKTWGMQHFAQREIARLKEKIANAKVLCAVSGGVDSTVVATLLHRAIKDNLIAVFVDHGLLRKNEKERVQAMFKDLQIPLNTIDAKGIFLSKLKGVSEPELKRKIIGETFIEVFEKEAKKHHLKGKIEFLAQGTLYPDVIESVSVKGPSKVIKTHHNVGGLPEWMDFKLIEPLRELFKDEARLLGKELGVSQDFLMHHPFPGPGLAVRILGEVSESKIKRLQEADFIFIEELKKANLYDKVWQAFCVLLNVNSVGVMGDNRTYENAICLRAVNASDGMTASFSFLEHSFLEKVSNRITNEVSGINRVVYDITSKPPGTIEWE.

Positions 1 to 189 (MILVLDFGSQ…ALLVCGCEKT (189 aa)) constitute a Glutamine amidotransferase type-1 domain. Cys78 serves as the catalytic Nucleophile. Catalysis depends on residues His163 and Glu165. The GMPS ATP-PPase domain maps to 190–383 (WGMQHFAQRE…LGVSQDFLMH (194 aa)). 217-223 (SGGVDST) contacts ATP.

In terms of assembly, homodimer.

It carries out the reaction XMP + L-glutamine + ATP + H2O = GMP + L-glutamate + AMP + diphosphate + 2 H(+). It functions in the pathway purine metabolism; GMP biosynthesis; GMP from XMP (L-Gln route): step 1/1. Functionally, catalyzes the synthesis of GMP from XMP. The protein is GMP synthase [glutamine-hydrolyzing] of Helicobacter pylori (strain G27).